Here is a 227-residue protein sequence, read N- to C-terminus: Cytochrome c oxidase subunit 2 (227 aa).

Topologically, residues 1 to 14 are mitochondrial intermembrane; it reads MAYPVQLGFQDAAS. The chain crosses the membrane as a helical span at residues 15-45; it reads PIMEELLYFHDHTLMIMFLISSLVLYIISLM. Over 46 to 59 the chain is Mitochondrial matrix; sequence LTTELMHTNTMDAQ. A helical membrane pass occupies residues 60 to 87; that stretch reads EVETVWTILPAAILILIALPSLRILYMM. At 88 to 227 the chain is on the mitochondrial intermembrane side; it reads DEITTPSLTL…HFEEWLLSML (140 aa). Histidine 161, cysteine 196, glutamate 198, cysteine 200, histidine 204, and methionine 207 together coordinate Cu cation. Glutamate 198 provides a ligand contact to Mg(2+).

This sequence belongs to the cytochrome c oxidase subunit 2 family. Component of the cytochrome c oxidase (complex IV, CIV), a multisubunit enzyme composed of 14 subunits. The complex is composed of a catalytic core of 3 subunits MT-CO1, MT-CO2 and MT-CO3, encoded in the mitochondrial DNA, and 11 supernumerary subunits COX4I, COX5A, COX5B, COX6A, COX6B, COX6C, COX7A, COX7B, COX7C, COX8 and NDUFA4, which are encoded in the nuclear genome. The complex exists as a monomer or a dimer and forms supercomplexes (SCs) in the inner mitochondrial membrane with NADH-ubiquinone oxidoreductase (complex I, CI) and ubiquinol-cytochrome c oxidoreductase (cytochrome b-c1 complex, complex III, CIII), resulting in different assemblies (supercomplex SCI(1)III(2)IV(1) and megacomplex MCI(2)III(2)IV(2)). Found in a complex with TMEM177, COA6, COX18, COX20, SCO1 and SCO2. Interacts with TMEM177 in a COX20-dependent manner. Interacts with COX20. Interacts with COX16. Cu cation is required as a cofactor.

The protein localises to the mitochondrion inner membrane. It catalyses the reaction 4 Fe(II)-[cytochrome c] + O2 + 8 H(+)(in) = 4 Fe(III)-[cytochrome c] + 2 H2O + 4 H(+)(out). In terms of biological role, component of the cytochrome c oxidase, the last enzyme in the mitochondrial electron transport chain which drives oxidative phosphorylation. The respiratory chain contains 3 multisubunit complexes succinate dehydrogenase (complex II, CII), ubiquinol-cytochrome c oxidoreductase (cytochrome b-c1 complex, complex III, CIII) and cytochrome c oxidase (complex IV, CIV), that cooperate to transfer electrons derived from NADH and succinate to molecular oxygen, creating an electrochemical gradient over the inner membrane that drives transmembrane transport and the ATP synthase. Cytochrome c oxidase is the component of the respiratory chain that catalyzes the reduction of oxygen to water. Electrons originating from reduced cytochrome c in the intermembrane space (IMS) are transferred via the dinuclear copper A center (CU(A)) of subunit 2 and heme A of subunit 1 to the active site in subunit 1, a binuclear center (BNC) formed by heme A3 and copper B (CU(B)). The BNC reduces molecular oxygen to 2 water molecules using 4 electrons from cytochrome c in the IMS and 4 protons from the mitochondrial matrix. In Lemur catta (Ring-tailed lemur), this protein is Cytochrome c oxidase subunit 2 (MT-CO2).